Here is a 183-residue protein sequence, read N- to C-terminus: D-glycero-alpha-D-manno-heptose-1,7-bisphosphate 7-phosphatase (183 aa).

The Zn(2+) site is built by Cys-93, His-95, Cys-108, and Cys-110.

Belongs to the GmhB family.

Its subcellular location is the cytoplasm. The enzyme catalyses D-glycero-alpha-D-manno-heptose 1,7-bisphosphate + H2O = D-glycero-alpha-D-manno-heptose 1-phosphate + phosphate. The protein operates within nucleotide-sugar biosynthesis; GDP-D-glycero-alpha-D-manno-heptose biosynthesis; GDP-D-glycero-alpha-D-manno-heptose from D-glycero-alpha-D-manno-heptose 7-phosphate: step 2/3. Its function is as follows. Converts the D-glycero-alpha-D-manno-heptose 1,7-bisphosphate intermediate into D-glycero-alpha-D-manno-heptose 1-phosphate by removing the phosphate group at the C-7 position. This Photorhabdus laumondii subsp. laumondii (strain DSM 15139 / CIP 105565 / TT01) (Photorhabdus luminescens subsp. laumondii) protein is D-glycero-alpha-D-manno-heptose-1,7-bisphosphate 7-phosphatase (gmhB2).